We begin with the raw amino-acid sequence, 545 residues long: Glucose-6-phosphate isomerase (545 aa).

E351 functions as the Proton donor in the catalytic mechanism. Catalysis depends on residues H382 and K510.

This sequence belongs to the GPI family.

It is found in the cytoplasm. It catalyses the reaction alpha-D-glucose 6-phosphate = beta-D-fructose 6-phosphate. It functions in the pathway carbohydrate biosynthesis; gluconeogenesis. It participates in carbohydrate degradation; glycolysis; D-glyceraldehyde 3-phosphate and glycerone phosphate from D-glucose: step 2/4. In terms of biological role, catalyzes the reversible isomerization of glucose-6-phosphate to fructose-6-phosphate. The sequence is that of Glucose-6-phosphate isomerase from Shewanella halifaxensis (strain HAW-EB4).